Reading from the N-terminus, the 478-residue chain is Elongation factor Tu, chloroplastic (478 aa).

Low complexity predominate over residues 1-29 (MASISAATATSSTKLVSSNSTNPLLPSST). The disordered stretch occupies residues 1 to 31 (MASISAATATSSTKLVSSNSTNPLLPSSTKP). Residues 1–69 (MASISAATAT…THRHRRFTVR (69 aa)) constitute a chloroplast transit peptide. One can recognise a tr-type G domain in the interval 79–283 (KPHVNIGTIG…AVDSYIPIPV (205 aa)). Positions 88–95 (GHVDHGKT) are G1. 88 to 95 (GHVDHGKT) contacts GTP. The interval 129-133 (GITIN) is G2. The segment at 150-153 (DCPG) is G3. GTP contacts are provided by residues 150 to 154 (DCPGH) and 205 to 208 (NKQD). The G4 stretch occupies residues 205 to 208 (NKQD). The interval 243 to 245 (SAL) is G5.

It belongs to the TRAFAC class translation factor GTPase superfamily. Classic translation factor GTPase family. EF-Tu/EF-1A subfamily.

The protein localises to the plastid. It is found in the chloroplast. Functionally, this protein promotes the GTP-dependent binding of aminoacyl-tRNA to the A-site of ribosomes during protein biosynthesis. This Nicotiana tabacum (Common tobacco) protein is Elongation factor Tu, chloroplastic (TUFA).